The following is a 90-amino-acid chain: MYKYCFRKPACISYRGIRFMSKASDTDPTLANASSAKRSAFESREKAKEDFFVHQHEIEQLRKLKESLKLHREELDELESRVDKKMKSNE.

Residues 42–89 (ESREKAKEDFFVHQHEIEQLRKLKESLKLHREELDELESRVDKKMKSN) adopt a coiled-coil conformation.

It belongs to the ATPase inhibitor family.

It localises to the mitochondrion. In terms of biological role, forms a one-to-one complex with ATPase to inhibit the enzyme activity completely. In Schizosaccharomyces pombe (strain 972 / ATCC 24843) (Fission yeast), this protein is Putative ATPase inhibitor, mitochondrial (inh1).